The following is a 568-amino-acid chain: Glucose-6-phosphate isomerase, cytosolic 1 (568 aa).

The active-site Proton donor is the Glu-360. Residues His-391 and Lys-516 contribute to the active site.

Belongs to the GPI family. As to quaternary structure, homodimer.

Its subcellular location is the cytoplasm. It carries out the reaction alpha-D-glucose 6-phosphate = beta-D-fructose 6-phosphate. It functions in the pathway carbohydrate degradation; glycolysis; D-glyceraldehyde 3-phosphate and glycerone phosphate from D-glucose: step 2/4. The protein is Glucose-6-phosphate isomerase, cytosolic 1 (PGIC1) of Clarkia mildrediae.